Here is a 526-residue protein sequence, read N- to C-terminus: Bifunctional purine biosynthesis protein PurH (526 aa).

An MGS-like domain is found at 1-147; that stretch reads MSSIKRALIS…KNWKHVAIVT (147 aa).

The protein belongs to the PurH family.

It carries out the reaction (6R)-10-formyltetrahydrofolate + 5-amino-1-(5-phospho-beta-D-ribosyl)imidazole-4-carboxamide = 5-formamido-1-(5-phospho-D-ribosyl)imidazole-4-carboxamide + (6S)-5,6,7,8-tetrahydrofolate. It catalyses the reaction IMP + H2O = 5-formamido-1-(5-phospho-D-ribosyl)imidazole-4-carboxamide. It participates in purine metabolism; IMP biosynthesis via de novo pathway; 5-formamido-1-(5-phospho-D-ribosyl)imidazole-4-carboxamide from 5-amino-1-(5-phospho-D-ribosyl)imidazole-4-carboxamide (10-formyl THF route): step 1/1. It functions in the pathway purine metabolism; IMP biosynthesis via de novo pathway; IMP from 5-formamido-1-(5-phospho-D-ribosyl)imidazole-4-carboxamide: step 1/1. The sequence is that of Bifunctional purine biosynthesis protein PurH from Neisseria meningitidis serogroup B (strain ATCC BAA-335 / MC58).